Consider the following 453-residue polypeptide: MGANKQMNLGFLFQISGVHYGGWRYPSAQPHRATDIQYYAEIVRTAERGKLDFCFLADSIAAYEGSADQQDRSKDALMAAEPKRLLEPFTLLAALAMVTEHIGLVTTATTTYNEPYTMARLFASLDHITNGRAGWNVVTSANLAEAHNFGRDGHVEHGDRYARAEEFINVVFKLWDSIEDGAYLRDKLAGRYGLSEKIHFINHIGEHFKVRGPLNVPRPPQGHPVIVQAGSSHPGKELAARTAEVVFTAQQTLADGKAFYSDVKGRMAKYGRSSENLKVLPGVVVYVAETESEAKAKYETVSNLVPPDFGLFMLSDLLGEIDLKQFDIDGPLPEDLPEAKGSQSRREVIINLARRENLTIRQLYQRVSGASGHRSIWGTPKQIADQFEQWVYEEAADGFNILPPYLPESMNDFVNFVVPELQRRGIFRTEYEGSTLRDHLGLARPKNSVAKPS.

Residues Asp-58, Thr-107, His-157, Tyr-161, Ser-231, and Ser-232 each coordinate FMN.

Belongs to the NtaA/SnaA/DszA monooxygenase family. Heterodimer of two subunits, A and B.

It catalyses the reaction nitrilotriacetate + FMNH2 + O2 = aminodiacetate + FMN + glyoxylate + H2O. Its function is as follows. Hydroxylation of nitrilotriacetate. This Aminobacter aminovorans (Chelatobacter heintzii) protein is Nitrilotriacetate monooxygenase component A (ntaA).